Consider the following 77-residue polypeptide: Small ribosomal subunit protein uS17 (77 aa).

It belongs to the universal ribosomal protein uS17 family. Part of the 30S ribosomal subunit.

In terms of biological role, one of the primary rRNA binding proteins, it binds specifically to the 5'-end of 16S ribosomal RNA. This Rickettsia rickettsii (strain Sheila Smith) protein is Small ribosomal subunit protein uS17.